The sequence spans 177 residues: Protein SOB FIVE-LIKE 6 (177 aa).

An SOFL-A motif is present at residues 14–19 (SGWTMY). Disordered regions lie at residues 37–60 (ETKQ…PYYC) and 78–104 (KSKS…FNSS). An SOFL-B motif is present at residues 47 to 56 (SMVSDASSGP). Positions 79–90 (SKSKNKNKNKKK) are enriched in basic residues.

The protein belongs to the SOFL plant protein family. In terms of tissue distribution, expressed in seedlings, flowers and siliques. Barely detectable in roots and leaves.

The protein localises to the cytoplasm. Its subcellular location is the nucleus. Functionally, involved in cytokinin-mediated development. The chain is Protein SOB FIVE-LIKE 6 from Arabidopsis thaliana (Mouse-ear cress).